The primary structure comprises 466 residues: Ribosomal protein uS12 methylthiotransferase RimO (466 aa).

An MTTase N-terminal domain is found at 18–133; the sequence is PRIGFVSLGC…VMDAVHQHVP (116 aa). 6 residues coordinate [4Fe-4S] cluster: cysteine 27, cysteine 63, cysteine 92, cysteine 164, cysteine 168, and cysteine 171. Residues 150-391 form the Radical SAM core domain; sequence LTPKHYAYLK…MAVAEAVSTA (242 aa). The 73-residue stretch at 394–466 folds into the TRAM domain; that stretch reads QRRVGSSMQV…QGHDLIGELI (73 aa).

The protein belongs to the methylthiotransferase family. RimO subfamily. [4Fe-4S] cluster is required as a cofactor.

It localises to the cytoplasm. It carries out the reaction L-aspartate(89)-[ribosomal protein uS12]-hydrogen + (sulfur carrier)-SH + AH2 + 2 S-adenosyl-L-methionine = 3-methylsulfanyl-L-aspartate(89)-[ribosomal protein uS12]-hydrogen + (sulfur carrier)-H + 5'-deoxyadenosine + L-methionine + A + S-adenosyl-L-homocysteine + 2 H(+). Its function is as follows. Catalyzes the methylthiolation of an aspartic acid residue of ribosomal protein uS12. The polypeptide is Ribosomal protein uS12 methylthiotransferase RimO (Leptothrix cholodnii (strain ATCC 51168 / LMG 8142 / SP-6) (Leptothrix discophora (strain SP-6))).